A 177-amino-acid polypeptide reads, in one-letter code: Large ribosomal subunit protein uL6 (177 aa).

This sequence belongs to the universal ribosomal protein uL6 family. Part of the 50S ribosomal subunit.

Its function is as follows. This protein binds to the 23S rRNA, and is important in its secondary structure. It is located near the subunit interface in the base of the L7/L12 stalk, and near the tRNA binding site of the peptidyltransferase center. This Bordetella petrii (strain ATCC BAA-461 / DSM 12804 / CCUG 43448) protein is Large ribosomal subunit protein uL6.